Consider the following 254-residue polypeptide: Large ribosomal subunit protein uL4 (254 aa).

Residues 45 to 70 (PWGNDPEAGKRTSAKGWGSGRGTARV) form a disordered region.

Belongs to the universal ribosomal protein uL4 family. As to quaternary structure, part of the 50S ribosomal subunit.

Functionally, one of the primary rRNA binding proteins, this protein initially binds near the 5'-end of the 23S rRNA. It is important during the early stages of 50S assembly. It makes multiple contacts with different domains of the 23S rRNA in the assembled 50S subunit and ribosome. Forms part of the polypeptide exit tunnel. This chain is Large ribosomal subunit protein uL4, found in Methanobrevibacter smithii (strain ATCC 35061 / DSM 861 / OCM 144 / PS).